The primary structure comprises 533 residues: MGSILSRRIAGVEDIDIQANSAYRYPPKSAGNYFASHFFMGGEKFDTPHPEGYLFGENMDLNFLGSRPVQFPYVTPAPHEPVKTLRSLVNIRKDSLRLVRYKDDTDSPTEDGEKPRVLYSLEFTFDADARVAITIYCQAVEEFVNGMTVYSCKNPSLQSETVHYKRGVSQQFSLPSFKIDFSEWKDDELNFDLDRGVFPVVIQAVVDEGDVVEVTGHAHVLLAAFEKHVDGSFSVKPLKQKQIVDRVSYLLQEIYGIENKNNQETKPSDDENSDNSSECVVCLSDLRDTLILPCRHLCLCTSCADTLRYQANNCPICRLPFRALLQIRAVRKKPGALSPISFSPVLAQSVDHDEHSNSDSVPPGYEPISLLEALNGLRAVSPAIPSAPLYEEITYSGISDGLSQASCPLAGLDRIIENGIQKGKTQSKSPDSTLRSPSSPIHEEDEEKLSEDPEAPLPPSGVELVLQESSSPESFGTEEVGEPSLKQGSRVPSIDDVLQDGSPQHHGCSQPVPPADIYLPALGPESCSVGIEE.

Gly2 is lipidated: N-myristoyl glycine. The RING-type zinc finger occupies 278-317 (ECVVCLSDLRDTLILPCRHLCLCTSCADTLRYQANNCPIC). Residues 385–388 (PSAP) carry the Required for TSG101-binding motif. At Tyr390 the chain carries Phosphotyrosine. The tract at residues 421–519 (QKGKTQSKSP…QPVPPADIYL (99 aa)) is disordered. Polar residues predominate over residues 423–439 (GKTQSKSPDSTLRSPSS). Ser429, Ser450, and Ser502 each carry phosphoserine. Residues 443-454 (EEDEEKLSEDPE) show a composition bias toward acidic residues.

In terms of assembly, interacts with MC1R and MC4R. Interacts with TSG101. Interacts with mislocalized cytosolically exposed PRNP; this interaction alters MGRN1 subcellular location and causes lysosomal enlargement. Autoubiquitinated in vitro.

It is found in the cytoplasm. The protein resides in the cytosol. It localises to the cell membrane. Its subcellular location is the early endosome. The catalysed reaction is S-ubiquitinyl-[E2 ubiquitin-conjugating enzyme]-L-cysteine + [acceptor protein]-L-lysine = [E2 ubiquitin-conjugating enzyme]-L-cysteine + N(6)-ubiquitinyl-[acceptor protein]-L-lysine.. The protein operates within protein modification; protein ubiquitination. Its function is as follows. E3 ubiquitin-protein ligase. Mediates TSG101 monoubiquitination at multiple sites. Plays a role in the regulation of endosome-to-lysosome trafficking. Impairs MC1R- and MC4R-signaling by competing with GNAS-binding to MCRs and inhibiting agonist-induced cAMP production. Does not inhibit ADRB2-signaling. Does not promote MC1R ubiquitination. Also acts as a negative regulator of hedgehog signaling. This chain is E3 ubiquitin-protein ligase MGRN1 (Mgrn1), found in Rattus norvegicus (Rat).